Here is a 579-residue protein sequence, read N- to C-terminus: Probable receptor-like serine/threonine-protein kinase At5g57670 (579 aa).

A Phosphothreonine modification is found at Thr256. A Protein kinase domain is found at 267–542 (FHQGNIVGIG…LLTNGNEAEI (276 aa)). Residues 273-281 (VGIGGYSEV) and Lys295 each bind ATP. Asp392 functions as the Proton acceptor in the catalytic mechanism. At Ser396 the chain carries Phosphoserine. Thr432 carries the phosphothreonine modification.

The protein belongs to the protein kinase superfamily. Ser/Thr protein kinase family.

It catalyses the reaction L-seryl-[protein] + ATP = O-phospho-L-seryl-[protein] + ADP + H(+). It carries out the reaction L-threonyl-[protein] + ATP = O-phospho-L-threonyl-[protein] + ADP + H(+). The protein is Probable receptor-like serine/threonine-protein kinase At5g57670 of Arabidopsis thaliana (Mouse-ear cress).